The sequence spans 319 residues: Malate dehydrogenase (319 aa).

NAD(+) is bound by residues Gly10–Gly15 and Asp34. Residues Arg83 and Arg89 each contribute to the substrate site. Residues Asn96 and Ile119–Asn121 each bind NAD(+). Positions 121 and 152 each coordinate substrate. His176 serves as the catalytic Proton acceptor.

This sequence belongs to the LDH/MDH superfamily. MDH type 3 family.

The enzyme catalyses (S)-malate + NAD(+) = oxaloacetate + NADH + H(+). Catalyzes the reversible oxidation of malate to oxaloacetate. This Francisella philomiragia subsp. philomiragia (strain ATCC 25017 / CCUG 19701 / FSC 153 / O#319-036) protein is Malate dehydrogenase.